We begin with the raw amino-acid sequence, 79 residues long: Acyl carrier protein (79 aa).

In terms of domain architecture, Carrier spans 2–77 (ADFEARVKEI…SAIDYVKTHV (76 aa)). Position 37 is an O-(pantetheine 4'-phosphoryl)serine (Ser-37).

Belongs to the acyl carrier protein (ACP) family. In terms of processing, 4'-phosphopantetheine is transferred from CoA to a specific serine of apo-ACP by AcpS. This modification is essential for activity because fatty acids are bound in thioester linkage to the sulfhydryl of the prosthetic group.

The protein resides in the cytoplasm. It functions in the pathway lipid metabolism; fatty acid biosynthesis. Its function is as follows. Carrier of the growing fatty acid chain in fatty acid biosynthesis. The sequence is that of Acyl carrier protein from Endomicrobium trichonymphae.